The primary structure comprises 208 residues: Probable GTP-binding protein EngB (208 aa).

Residues 22 to 195 (GLPEIALAGR…WHSIEEIFIA (174 aa)) form the EngB-type G domain. GTP-binding positions include 30–37 (GRSNVGKS), 57–61 (GKTRT), 75–78 (DLPG), 142–145 (TKSD), and 174–176 (ISS). Residues Ser-37 and Thr-59 each coordinate Mg(2+).

It belongs to the TRAFAC class TrmE-Era-EngA-EngB-Septin-like GTPase superfamily. EngB GTPase family. It depends on Mg(2+) as a cofactor.

In terms of biological role, necessary for normal cell division and for the maintenance of normal septation. This Alkaliphilus oremlandii (strain OhILAs) (Clostridium oremlandii (strain OhILAs)) protein is Probable GTP-binding protein EngB.